Here is a 1448-residue protein sequence, read N- to C-terminus: DNA primase TraC (1448 aa).

3 stretches are compositionally biased toward basic and acidic residues: residues 844–856 (ARVQEERVRRDPN), 863–872 (SAAKEARKTA), and 882–898 (DAQRRAAELERQERDRQ). 2 disordered regions span residues 844–915 (ARVQ…INVP) and 952–982 (QGAATAAVEPRSAQPAPEAQGEAQKPAQQAQ). Residues 964 to 982 (AQPAPEAQGEAQKPAQQAQ) show a composition bias toward low complexity. A Toprim domain is found at 1237–1325 (PALVISEGYA…GKAIFPIFAP (89 aa)). Residues 1414 to 1448 (ISQVQRDEQQHQEQKHVEKKQQQIEQRPRRAARIG) are disordered. Positions 1418-1441 (QRDEQQHQEQKHVEKKQQQIEQRP) are enriched in basic and acidic residues.

Required for autonomous replication in E.coli. Transferred into the recipient cell during bacterial conjugation. Catalyzes the synthesis of short oligoribonucleotide primers with CpA or pCpA at their 5'-termini on a single-stranded template DNA. The sequence is that of DNA primase TraC (traC) from Escherichia coli.